We begin with the raw amino-acid sequence, 193 residues long: MLLDAQRFFNRSFSINVICELKHNVNTRRKFEIKDWPTIMLVSRNDKPKISSEEVTHFIDDYKKRRKTQMTRFFGITIFTLITCRIAMKKMITAKVPLNTFQANYASRTQTITHTQKSLAGSLLAATGMTLGIFGMGITGTCWSWDVSSFQELKQRLERRANNEFVVTNMPLDKRSQQVVDSLVKTHNSSLCK.

A helical transmembrane segment spans residues 119–143; sequence LAGSLLAATGMTLGIFGMGITGTCW.

It is found in the mitochondrion membrane. This is an uncharacterized protein from Saccharomyces cerevisiae (strain ATCC 204508 / S288c) (Baker's yeast).